The chain runs to 110 residues: U12-hexatoxin-Hi1a (110 aa).

The signal sequence occupies residues 1 to 18; it reads MRVALVFLVLSILAATHG. 3 cysteine pairs are disulfide-bonded: cysteine 72–cysteine 86, cysteine 79–cysteine 91, and cysteine 85–cysteine 104.

Expressed by the venom gland.

The protein resides in the secreted. Functionally, probable ion channel inhibitor. This is U12-hexatoxin-Hi1a from Hadronyche infensa (Fraser island funnel-web spider).